We begin with the raw amino-acid sequence, 239 residues long: 4-hydroxy-tetrahydrodipicolinate reductase (239 aa).

NAD(+)-binding positions include 12-17, 94-96, and 118-121; these read GASGRM, GTT, and ASNF. His-150 acts as the Proton donor/acceptor in catalysis. A (S)-2,3,4,5-tetrahydrodipicolinate-binding site is contributed by His-151. Lys-154 serves as the catalytic Proton donor. 160–161 is a (S)-2,3,4,5-tetrahydrodipicolinate binding site; that stretch reads GT.

Belongs to the DapB family.

The protein localises to the cytoplasm. It catalyses the reaction (S)-2,3,4,5-tetrahydrodipicolinate + NAD(+) + H2O = (2S,4S)-4-hydroxy-2,3,4,5-tetrahydrodipicolinate + NADH + H(+). The catalysed reaction is (S)-2,3,4,5-tetrahydrodipicolinate + NADP(+) + H2O = (2S,4S)-4-hydroxy-2,3,4,5-tetrahydrodipicolinate + NADPH + H(+). Its pathway is amino-acid biosynthesis; L-lysine biosynthesis via DAP pathway; (S)-tetrahydrodipicolinate from L-aspartate: step 4/4. In terms of biological role, catalyzes the conversion of 4-hydroxy-tetrahydrodipicolinate (HTPA) to tetrahydrodipicolinate. The chain is 4-hydroxy-tetrahydrodipicolinate reductase from Stenotrophomonas maltophilia (strain R551-3).